Reading from the N-terminus, the 513-residue chain is Probable DNA ligase (513 aa).

Glu215 is an ATP binding site. The active-site N6-AMP-lysine intermediate is Lys217. Positions 222, 237, 266, 306, 378, and 384 each coordinate ATP.

Belongs to the ATP-dependent DNA ligase family. Requires Mg(2+) as cofactor.

The enzyme catalyses ATP + (deoxyribonucleotide)n-3'-hydroxyl + 5'-phospho-(deoxyribonucleotide)m = (deoxyribonucleotide)n+m + AMP + diphosphate.. DNA ligase that seals nicks in double-stranded DNA during DNA replication, DNA recombination and DNA repair. In Mycobacterium marinum (strain ATCC BAA-535 / M), this protein is Probable DNA ligase.